Here is a 297-residue protein sequence, read N- to C-terminus: MTEAIIIDGKEFSSNLRNKIAEDVKAFKKERNVVPGLAVVLVGEDPASRIYVRKKEEMTTAVGMNSLSYRLDANASQQELLDLIETLNHDPAVHGILVQLPLPKHIDTPTILEAIDPDKDVDGFHVVNAGRLAIGTPSLVPCTPAGCMMLLEHSLGSLKGKNALVIGRSTIVGRPMAQLLLAADCTVTVAHRHTKNLEELCRQADIVVAAVGIPHFVKASWLKPGAVVIDVGINRVPAEDEAAKAAGKTRIVGDVDFVEAAKVASAITPVPGGVGPMTIACLLNNTVQAARNLTSAS.

Residues 167–169 (GRS) and I233 contribute to the NADP(+) site.

This sequence belongs to the tetrahydrofolate dehydrogenase/cyclohydrolase family. Homodimer.

It carries out the reaction (6R)-5,10-methylene-5,6,7,8-tetrahydrofolate + NADP(+) = (6R)-5,10-methenyltetrahydrofolate + NADPH. The catalysed reaction is (6R)-5,10-methenyltetrahydrofolate + H2O = (6R)-10-formyltetrahydrofolate + H(+). Its pathway is one-carbon metabolism; tetrahydrofolate interconversion. Catalyzes the oxidation of 5,10-methylenetetrahydrofolate to 5,10-methenyltetrahydrofolate and then the hydrolysis of 5,10-methenyltetrahydrofolate to 10-formyltetrahydrofolate. The protein is Bifunctional protein FolD of Zymomonas mobilis subsp. mobilis (strain ATCC 31821 / ZM4 / CP4).